The sequence spans 367 residues: Uroporphyrinogen decarboxylase (367 aa).

Substrate-binding positions include arginine 28–arginine 32, aspartate 78, tyrosine 158, threonine 213, and histidine 334.

It belongs to the uroporphyrinogen decarboxylase family. In terms of assembly, homodimer.

The protein resides in the cytoplasm. It carries out the reaction uroporphyrinogen III + 4 H(+) = coproporphyrinogen III + 4 CO2. Its pathway is porphyrin-containing compound metabolism; protoporphyrin-IX biosynthesis; coproporphyrinogen-III from 5-aminolevulinate: step 4/4. Its function is as follows. Catalyzes the decarboxylation of four acetate groups of uroporphyrinogen-III to yield coproporphyrinogen-III. The chain is Uroporphyrinogen decarboxylase from Ralstonia pickettii (strain 12J).